The primary structure comprises 288 residues: Serine/threonine-protein phosphatase PGAM5, mitochondrial (288 aa).

Residues Met-1 to Ala-6 lie on the Mitochondrial matrix side of the membrane. A helical transmembrane segment spans residues Leu-7–Gly-29. The Mitochondrial intermembrane portion of the chain corresponds to Lys-30–Ser-288. Residues Asn-76 to Glu-81 are interaction with KEAP1. The residue at position 86 (Ser-86) is a Phosphoserine. N6-acetyllysine is present on residues Lys-115, Lys-143, and Lys-190.

It belongs to the phosphoglycerate mutase family. BPG-dependent PGAM subfamily. In terms of assembly, dimer. Forms a ternary complex with NFE2L2 and KEAP1. Interacts with BCL2L1 and MAP3K5. Upon TNF-induced necrosis, forms in complex with RIPK1, RIPK3 and MLKL; the formation of this complex leads to PGAM5 phosphorylation. Isoform 2, but not isoform 1, interacts with DNM1L; this interaction leads to DNM1L dephosphorylation and activation and eventually to mitochondria fragmentation. Phosphorylated by the RIPK1/RIPK3 complex under necrotic conditions. This phosphorylation increases PGAM5 phosphatase activity. In terms of processing, proteolytically cleaved by PARL in response to loss of mitochondrial membrane potential.

The protein localises to the mitochondrion outer membrane. It localises to the mitochondrion inner membrane. It catalyses the reaction O-phospho-L-seryl-[protein] + H2O = L-seryl-[protein] + phosphate. The catalysed reaction is O-phospho-L-threonyl-[protein] + H2O = L-threonyl-[protein] + phosphate. Mitochondrial serine/threonine phosphatase that dephosphorylates various substrates and thus plays a role in different biological processes including cellular senescence or mitophagy. Modulates cellular senescence by regulating mitochondrial dynamics. Mechanistically, participates in mitochondrial fission through dephosphorylating DNM1L/DRP1. Additionally, dephosphorylates MFN2 in a stress-sensitive manner and consequently protects it from ubiquitination and degradation to promote mitochondrial network formation. Regulates mitophagy independent of PARKIN by interacting with and dephosphorylating FUNDC1, which interacts with LC3. Regulates anti-oxidative response by forming a tertiary complex with KEAP1 and NRF2. Regulates necroptosis by acting as a RIPK3 target and recruiting the RIPK1-RIPK3-MLKL necrosis 'attack' complex to mitochondria. In Rattus norvegicus (Rat), this protein is Serine/threonine-protein phosphatase PGAM5, mitochondrial (Pgam5).